A 434-amino-acid chain; its full sequence is Glutamyl-tRNA reductase (434 aa).

Substrate-binding positions include 49–52 (TCNR), serine 109, 114–116 (EPQ), and glutamine 120. Cysteine 50 (nucleophile) is an active-site residue. 189 to 194 (GAGEMC) serves as a coordination point for NADP(+).

It belongs to the glutamyl-tRNA reductase family. As to quaternary structure, homodimer.

The enzyme catalyses (S)-4-amino-5-oxopentanoate + tRNA(Glu) + NADP(+) = L-glutamyl-tRNA(Glu) + NADPH + H(+). It participates in porphyrin-containing compound metabolism; protoporphyrin-IX biosynthesis; 5-aminolevulinate from L-glutamyl-tRNA(Glu): step 1/2. Its function is as follows. Catalyzes the NADPH-dependent reduction of glutamyl-tRNA(Glu) to glutamate 1-semialdehyde (GSA). This Trichlorobacter lovleyi (strain ATCC BAA-1151 / DSM 17278 / SZ) (Geobacter lovleyi) protein is Glutamyl-tRNA reductase.